A 309-amino-acid polypeptide reads, in one-letter code: Homoserine kinase (309 aa).

Position 91–101 (Pro91–Cys101) interacts with ATP.

It belongs to the GHMP kinase family. Homoserine kinase subfamily.

Its subcellular location is the cytoplasm. The enzyme catalyses L-homoserine + ATP = O-phospho-L-homoserine + ADP + H(+). It functions in the pathway amino-acid biosynthesis; L-threonine biosynthesis; L-threonine from L-aspartate: step 4/5. Its function is as follows. Catalyzes the ATP-dependent phosphorylation of L-homoserine to L-homoserine phosphate. This is Homoserine kinase from Klebsiella pneumoniae (strain 342).